The following is a 269-amino-acid chain: 2-dehydro-3-deoxyphosphooctonate aldolase (269 aa).

The protein belongs to the KdsA family.

It is found in the cytoplasm. The catalysed reaction is D-arabinose 5-phosphate + phosphoenolpyruvate + H2O = 3-deoxy-alpha-D-manno-2-octulosonate-8-phosphate + phosphate. It functions in the pathway carbohydrate biosynthesis; 3-deoxy-D-manno-octulosonate biosynthesis; 3-deoxy-D-manno-octulosonate from D-ribulose 5-phosphate: step 2/3. The protein operates within bacterial outer membrane biogenesis; lipopolysaccharide biosynthesis. This is 2-dehydro-3-deoxyphosphooctonate aldolase from Chlamydia felis (strain Fe/C-56) (Chlamydophila felis).